The sequence spans 284 residues: MDLSRINTWKSKQLKSFLSSKDAFKADVHGHSALYYAIADNNVRLVCTLLNAGALKNLLENEFPLHQAATLEDTKIVKILLFSGLDDSQFDDKGNTALYYAVDSGNMQTVKLFVKKNWRLMFYGKTGWKTSFYHAVMLNDVSIVSYFLSEIPSTFDLAILLSCIHITIKNGHVDMMILLLDYMTSTNTNNSLLFIPDIKLAIDNKDIEMLQALFKYDINIYSANLENVLLDDAEIAKMIIEKHVEYKSDSYTKDLDIVKNNKLDEIISKNKELRLMYVNCVKKN.

ANK repeat units follow at residues 29 to 58 (HGHS…LKNL), 60 to 89 (ENEF…DDSQ), 93 to 122 (KGNT…RLMF), 127 to 157 (GWKT…TFDL), 159 to 188 (ILLS…STNT), and 193 to 222 (LFIP…NIYS).

Belongs to the orthopoxvirus OPG039 family.

The protein localises to the host cytoplasm. Its subcellular location is the host nucleus. Inhibits antiviral activity induced by type I interferons. Does not block signal transduction of IFN, but is important to counter the host antiviral state induced by a pre-treatment with IFN. Plays a role in the inhibition of host NF-kappa-B activation by preventing the acetylation of the RELA/p65 subunit of NF-kappaB. The sequence is that of Interferon antagonist OPG040 (OPG039) from Bos taurus (Bovine).